A 287-amino-acid chain; its full sequence is Pyridoxal kinase PdxY (287 aa).

Residues Ser-10 and 45 to 46 (TQ) each bind substrate. ATP-binding positions include Asp-112, Ala-144, Glu-149, Lys-182, and 209 to 212 (RPLV). A substrate-binding site is contributed by Asp-224.

The protein belongs to the pyridoxine kinase family. PdxY subfamily. As to quaternary structure, homodimer. The cofactor is Mg(2+).

It catalyses the reaction pyridoxal + ATP = pyridoxal 5'-phosphate + ADP + H(+). The protein operates within cofactor metabolism; pyridoxal 5'-phosphate salvage; pyridoxal 5'-phosphate from pyridoxal: step 1/1. Its function is as follows. Pyridoxal kinase involved in the salvage pathway of pyridoxal 5'-phosphate (PLP). Catalyzes the phosphorylation of pyridoxal to PLP. This is Pyridoxal kinase PdxY from Shigella dysenteriae serotype 1 (strain Sd197).